Consider the following 595-residue polypeptide: Indole-3-acetic acid-amido synthetase GH3.3 (595 aa).

The protein belongs to the IAA-amido conjugating enzyme family.

In terms of biological role, catalyzes the synthesis of indole-3-acetic acid (IAA)-amino acid conjugates, providing a mechanism for the plant to cope with the presence of excess auxin. Strongly reactive with Glu, Gln, Trp, Asp, Ala, Leu, Phe, Gly, Tyr, Met, Ile and Val. Little or no product formation with His, Ser, Thr, Arg, Lys, or Cys. Also active on pyruvic and butyric acid analogs of IAA, PAA and the synthetic auxin naphthaleneacetic acid (NAA). The two chlorinated synthetic auxin herbicides 2,4-D and 3,6-dichloro-o-anisic acid (dicamba) cannot be used as substrates. This chain is Indole-3-acetic acid-amido synthetase GH3.3 (GH3.3), found in Arabidopsis thaliana (Mouse-ear cress).